A 176-amino-acid chain; its full sequence is Mitochondrial inner membrane protein Mpv17 (176 aa).

4 consecutive transmembrane segments (helical) span residues 18–38 (VQVL…QQLV), 57–77 (LGCG…DHLI), 94–114 (GGFA…LNGM), and 131–151 (LITN…LVPL).

It belongs to the peroxisomal membrane protein PXMP2/4 family.

Its subcellular location is the mitochondrion inner membrane. Its function is as follows. Non-selective channel that modulates the membrane potential under normal conditions and oxidative stress, and is involved in mitochondrial homeostasis. Involved in mitochondrial deoxynucleoside triphosphates (dNTP) pool homeostasis and mitochondrial DNA (mtDNA) maintenance. May be involved in the regulation of reactive oxygen species metabolism and the control of oxidative phosphorylation. This Rattus norvegicus (Rat) protein is Mitochondrial inner membrane protein Mpv17.